We begin with the raw amino-acid sequence, 173 residues long: Alpha-crystallin A chain (173 aa).

At Met-1 the chain carries N-acetylmethionine. The interval Met-1–Glu-63 is required for complex formation with BFSP1 and BFSP2. The residue at position 6 (Gln-6) is a Deamidated glutamine; partial. Ser-45 carries the phosphoserine modification. Gln-50 is modified (deamidated glutamine; partial). In terms of domain architecture, sHSP spans Leu-52–Ser-162. 2 positions are modified to N6-acetyllysine: Lys-70 and Lys-99. Zn(2+) is bound at residue His-100. Residue Asn-101 is modified to Deamidated asparagine; partial. Glu-102 and His-107 together coordinate Zn(2+). Ser-122 carries the post-translational modification Phosphoserine. Position 123 is a deamidated asparagine; partial (Asn-123). The tract at residues Pro-144 to Ser-173 is disordered. Residues Gly-153–Pro-167 are compositionally biased toward basic and acidic residues. A Zn(2+)-binding site is contributed by His-154. O-linked (GlcNAc) serine glycosylation occurs at Ser-162.

It belongs to the small heat shock protein (HSP20) family. As to quaternary structure, heteromer composed of three CRYAA and one CRYAB subunits. Inter-subunit bridging via zinc ions enhances stability, which is crucial as there is no protein turn over in the lens. Can also form homodimers and homotetramers (dimers of dimers) which serve as the building blocks of homooligomers. Within homooligomers, the zinc-binding motif is created from residues of 3 different molecules. His-100 and Glu-102 from one molecule are ligands of the zinc ion, and His-107 and His-154 residues from additional molecules complete the site with tetrahedral coordination geometry. Part of a complex required for lens intermediate filament formation composed of BFSP1, BFSP2 and CRYAA. Acetylation at Lys-70 may increase chaperone activity. Post-translationally, undergoes age-dependent proteolytical cleavage at the C-terminus.

The protein resides in the cytoplasm. The protein localises to the nucleus. Contributes to the transparency and refractive index of the lens. Acts as a chaperone, preventing aggregation of various proteins under a wide range of stress conditions. Required for the correct formation of lens intermediate filaments as part of a complex composed of BFSP1, BFSP2 and CRYAA. The sequence is that of Alpha-crystallin A chain (CRYAA) from Neovison vison (American mink).